The following is a 500-amino-acid chain: Pentatricopeptide repeat-containing protein At1g06580 (500 aa).

12 PPR repeats span residues 78-112, 113-147, 148-182, 183-217, 218-252, 253-287, 288-322, 323-357, 358-392, 393-427, 428-462, and 463-498; these read SIVD…GISH, DLYS…GFEP, SIVT…GYEP, NVVI…GIRP, DVVT…GISP, DVIT…SVNP, NIVT…GFFP, NAVT…GVDG, DTFT…GVHP, DMYT…KTVV, GIIT…GVSP, and DVIT…GLMP.

The protein belongs to the PPR family. P subfamily.

This is Pentatricopeptide repeat-containing protein At1g06580 from Arabidopsis thaliana (Mouse-ear cress).